A 668-amino-acid chain; its full sequence is DNA ligase (668 aa).

NAD(+) is bound by residues 34–38 (DAEYD), 83–84 (SL), and E113. The N6-AMP-lysine intermediate role is filled by K115. Residues R136, E170, K286, and K310 each coordinate NAD(+). Zn(2+)-binding residues include C404, C407, C422, and C427. The region spanning 590 to 668 (ESDSYFAGKT…EVKMLEELKK (79 aa)) is the BRCT domain.

The protein belongs to the NAD-dependent DNA ligase family. LigA subfamily. It depends on Mg(2+) as a cofactor. Mn(2+) serves as cofactor.

It carries out the reaction NAD(+) + (deoxyribonucleotide)n-3'-hydroxyl + 5'-phospho-(deoxyribonucleotide)m = (deoxyribonucleotide)n+m + AMP + beta-nicotinamide D-nucleotide.. Functionally, DNA ligase that catalyzes the formation of phosphodiester linkages between 5'-phosphoryl and 3'-hydroxyl groups in double-stranded DNA using NAD as a coenzyme and as the energy source for the reaction. It is essential for DNA replication and repair of damaged DNA. The polypeptide is DNA ligase (Bacillus pumilus (strain SAFR-032)).